The chain runs to 518 residues: Sodium-dependent glucose transporter 1 (518 aa).

12 consecutive transmembrane segments (helical) span residues 19-39 (TFQD…FIFV), 53-73 (GFLV…SATT), 82-102 (CKTA…IGIL), 107-127 (NVLI…ALHF), 139-159 (LAKL…SDFH), 221-241 (FRRA…FFFY), 307-327 (TSSL…IATS), 347-367 (YTTI…LGEM), 376-396 (LQGK…ASIA), 400-420 (LFPV…KEDR), 438-458 (EEEN…EMIE), and 466-486 (SIIE…YNQY). Residues 414–426 (RQRKEDRKSEDQK) are compositionally biased toward basic and acidic residues. The interval 414–448 (RQRKEDRKSEDQKALLSSSGLNEYEEENEEEDAEK) is disordered. The segment covering 436 to 448 (EYEEENEEEDAEK) has biased composition (acidic residues).

Belongs to the major facilitator superfamily.

The protein resides in the apical cell membrane. Functionally, may function as a sodium-dependent glucose transporter. Potential channels for urea in the inner medulla of kidney. This chain is Sodium-dependent glucose transporter 1, found in Homo sapiens (Human).